Reading from the N-terminus, the 198-residue chain is Probable nicotinate-nucleotide adenylyltransferase (198 aa).

The protein belongs to the NadD family.

The catalysed reaction is nicotinate beta-D-ribonucleotide + ATP + H(+) = deamido-NAD(+) + diphosphate. It participates in cofactor biosynthesis; NAD(+) biosynthesis; deamido-NAD(+) from nicotinate D-ribonucleotide: step 1/1. Catalyzes the reversible adenylation of nicotinate mononucleotide (NaMN) to nicotinic acid adenine dinucleotide (NaAD). The chain is Probable nicotinate-nucleotide adenylyltransferase from Chlorobium phaeobacteroides (strain BS1).